The sequence spans 103 residues: Enhancer of rudimentary homolog (103 aa).

Belongs to the E(R) family. Homodimer.

In terms of biological role, may have a role in the cell cycle. The sequence is that of Enhancer of rudimentary homolog from Aedes aegypti (Yellowfever mosquito).